Consider the following 610-residue polypeptide: UvrABC system protein C (610 aa).

The GIY-YIG domain occupies 16-94; sequence SQPGVYRMYD…IKLYQPRYNV (79 aa). The 36-residue stretch at 204 to 239 folds into the UVR domain; the sequence is DQVLTQLIARMEKASQDLAFEEAARIRDQIQAVRRV.

The protein belongs to the UvrC family. As to quaternary structure, interacts with UvrB in an incision complex.

It is found in the cytoplasm. In terms of biological role, the UvrABC repair system catalyzes the recognition and processing of DNA lesions. UvrC both incises the 5' and 3' sides of the lesion. The N-terminal half is responsible for the 3' incision and the C-terminal half is responsible for the 5' incision. The polypeptide is UvrABC system protein C (Salmonella paratyphi A (strain ATCC 9150 / SARB42)).